A 432-amino-acid polypeptide reads, in one-letter code: Adenylosuccinate synthetase (432 aa).

Residues 13–19 (GDEGKGK) and 41–43 (GHT) each bind GTP. Catalysis depends on Asp-14, which acts as the Proton acceptor. 2 residues coordinate Mg(2+): Asp-14 and Gly-41. IMP-binding positions include 14-17 (DEGK), 39-42 (NAGH), Thr-130, Arg-144, Gln-225, Thr-240, and Arg-304. The active-site Proton donor is His-42. 300-306 (ATTGRRR) contributes to the substrate binding site. GTP contacts are provided by residues Arg-306, 332-334 (KLD), and 415-417 (STG).

It belongs to the adenylosuccinate synthetase family. In terms of assembly, homodimer. Requires Mg(2+) as cofactor.

It is found in the cytoplasm. The enzyme catalyses IMP + L-aspartate + GTP = N(6)-(1,2-dicarboxyethyl)-AMP + GDP + phosphate + 2 H(+). It participates in purine metabolism; AMP biosynthesis via de novo pathway; AMP from IMP: step 1/2. In terms of biological role, plays an important role in the de novo pathway of purine nucleotide biosynthesis. Catalyzes the first committed step in the biosynthesis of AMP from IMP. In Klebsiella pneumoniae subsp. pneumoniae (strain ATCC 700721 / MGH 78578), this protein is Adenylosuccinate synthetase.